The following is a 148-amino-acid chain: Small ribosomal subunit protein eS6 (148 aa).

This sequence belongs to the eukaryotic ribosomal protein eS6 family.

The chain is Small ribosomal subunit protein eS6 from Pyrobaculum islandicum (strain DSM 4184 / JCM 9189 / GEO3).